The sequence spans 835 residues: Telomere length regulation protein TEL2 homolog (835 aa).

Disordered stretches follow at residues 455-501 (SADC…LAPY) and 629-648 (LSHEVSSESRSTGTGQHSIR). Positions 464-473 (ESSPSKSCPK) are enriched in low complexity. The segment covering 474–486 (AIEKSKMEAKADQ) has biased composition (basic and acidic residues). The span at 488-499 (SDSELDSDDDLA) shows a compositional bias: acidic residues. The span at 636–648 (ESRSTGTGQHSIR) shows a compositional bias: polar residues.

This sequence belongs to the TEL2 family.

The protein localises to the cytoplasm. It localises to the membrane. Its subcellular location is the nucleus. It is found in the chromosome. The protein resides in the telomere. Regulator of the DNA damage response (DDR). Part of the TTT complex that is required to stabilize protein levels of the phosphatidylinositol 3-kinase-related protein kinase (PIKK) family proteins. Promotes assembly, stabilizes and maintains the activity of TORC complexes, which regulate cell growth and survival in response to nutrient and hormonal signals. May be involved in telomere length regulation. This is Telomere length regulation protein TEL2 homolog (telo2) from Xenopus laevis (African clawed frog).